Consider the following 632-residue polypeptide: 1-deoxy-D-xylulose-5-phosphate synthase (632 aa).

Residues His-78 and 119–121 (AHS) each bind thiamine diphosphate. Mg(2+) is bound at residue Asp-150. Residues 151 to 152 (GA), Asn-179, Tyr-286, and Glu-368 contribute to the thiamine diphosphate site. Asn-179 is a binding site for Mg(2+).

This sequence belongs to the transketolase family. DXPS subfamily. As to quaternary structure, homodimer. It depends on Mg(2+) as a cofactor. The cofactor is thiamine diphosphate.

The catalysed reaction is D-glyceraldehyde 3-phosphate + pyruvate + H(+) = 1-deoxy-D-xylulose 5-phosphate + CO2. It participates in metabolic intermediate biosynthesis; 1-deoxy-D-xylulose 5-phosphate biosynthesis; 1-deoxy-D-xylulose 5-phosphate from D-glyceraldehyde 3-phosphate and pyruvate: step 1/1. Catalyzes the acyloin condensation reaction between C atoms 2 and 3 of pyruvate and glyceraldehyde 3-phosphate to yield 1-deoxy-D-xylulose-5-phosphate (DXP). In Albidiferax ferrireducens (strain ATCC BAA-621 / DSM 15236 / T118) (Rhodoferax ferrireducens), this protein is 1-deoxy-D-xylulose-5-phosphate synthase.